A 32-amino-acid polypeptide reads, in one-letter code: Cyclotide glopa B (32 aa).

Residues 1 to 32 constitute a cross-link (cyclopeptide (Gly-Asn)); that stretch reads GGSVPCIETCVWTGCFLVPGCSCKSDKKCYLN. Intrachain disulfides connect Cys-6/Cys-21, Cys-10/Cys-23, and Cys-15/Cys-29.

This is a cyclic peptide.

Probably participates in a plant defense mechanism. The protein is Cyclotide glopa B of Gloeospermum pauciflorum.